Reading from the N-terminus, the 337-residue chain is UDP-N-acetylenolpyruvoylglucosamine reductase (337 aa).

Positions 16–187 (ALPGRAARYQ…TSVIFRLAKA (172 aa)) constitute an FAD-binding PCMH-type domain. Residue arginine 160 is part of the active site. Serine 237 serves as the catalytic Proton donor. Residue glutamate 333 is part of the active site.

Requires FAD as cofactor.

The protein resides in the cytoplasm. It catalyses the reaction UDP-N-acetyl-alpha-D-muramate + NADP(+) = UDP-N-acetyl-3-O-(1-carboxyvinyl)-alpha-D-glucosamine + NADPH + H(+). It functions in the pathway cell wall biogenesis; peptidoglycan biosynthesis. Its function is as follows. Cell wall formation. This chain is UDP-N-acetylenolpyruvoylglucosamine reductase, found in Dechloromonas aromatica (strain RCB).